The following is a 492-amino-acid chain: Pyrin and HIN domain-containing protein 1 (492 aa).

In terms of domain architecture, Pyrin spans 1 to 88 (MANNYKKIVL…AETLKREKLK (88 aa)). 2 disordered regions span residues 106 to 199 (KTKQ…KPLA) and 400 to 492 (KNTN…PAVP). Basic and acidic residues predominate over residues 142–159 (PSEEETGTKRSKMSKEQT). Residues 160–173 (RPSCSAGASTSTAM) show a composition bias toward polar residues. Residues 181–194 (TSSSAPPNTSSTES) are compositionally biased toward low complexity. Residues 199-399 (ANRHATASKN…SEMHSFIQIQ (201 aa)) form the HIN-200 domain. Polar residues-rich tracts occupy residues 416 to 432 (QEQSQHPKPSEASTTLP) and 460 to 492 (GAQSSPANFRITSPTVAPPLSSDTSTNRHPAVP).

This sequence belongs to the HIN-200 family. In terms of assembly, interacts with MDM2. Expressed in spleen, lymph node and peripheral blood leukocytes, and at lower levels in thymus, bone marrow and fetal liver. Down-regulated in breast tumors.

Its subcellular location is the nucleus. The protein localises to the nucleoplasm. It is found in the nucleus speckle. Functionally, major mediator of the tumor suppressor activity of IFN in breast cancer cells. Promotes ubiquitination and subsequent degradation of MDM2, which leads to p53/TP53 stabilization. Promotes ubiquitination and subsequent degradation of HDAC1, which in turn enhances maspin expression, and impairs invasive activity of cancer cells. In Homo sapiens (Human), this protein is Pyrin and HIN domain-containing protein 1 (PYHIN1).